Reading from the N-terminus, the 170-residue chain is Cathelicidin antimicrobial peptide (170 aa).

The first 30 residues, 1–30 (MKTQRDSPSLGRWSLVLLLLGLVMPLAIVA), serve as a signal peptide directing secretion. Residues 31 to 131 (QVLSYQEAVL…DISCDKDNRR (101 aa)) constitute a propeptide, cathelin-like domain (CLD). Cystine bridges form between C86/C97 and C108/C125. Residues 150-162 (FKRIVQRIKDFLQ) form an active core region.

Belongs to the cathelicidin family. Monomer, homodimer or homotrimer (in vitro). Oligomerizes as tetra- or hexamer in solution (in vitro). Post-translationally, proteolytically cleaved by proteinase PRTN3 into antibacterial peptide LL-37. Proteolytically cleaved by cathepsin CTSG and neutrophil elastase ELANE. In terms of processing, resistant to proteolytic degradation in solution, and when bound to both zwitterionic (mimicking mammalian membranes) and negatively charged membranes (mimicking bacterial membranes). After secretion onto the skin surface, the CAMP gene product is processed by a serine protease-dependent mechanism into multiple novel antimicrobial peptides distinct from and shorter than cathelicidin LL-37. These peptides show enhanced antimicrobial action, acquiring the ability to kill skin pathogens such as S.aureus, E.coli and C.albicans. These peptides have lost the ability to stimulate CXCL8/IL8 release from keratinocytes. The peptides act synergistically, killing bacteria at lower concentrations when present together, and maintain activity at increased salt condition.

It localises to the secreted. It is found in the vesicle. Its function is as follows. Antimicrobial protein that is an integral component of the innate immune system. Binds to bacterial lipopolysaccharides (LPS). Acts via neutrophil N-formyl peptide receptors to enhance the release of CXCL2. Postsecretory processing generates multiple cathelicidin antimicrobial peptides with various lengths which act as a topical antimicrobial defense in sweat on skin. The unprocessed precursor form, cathelicidin antimicrobial peptide, inhibits the growth of Gram-negative E.coli and E.aerogenes with efficiencies comparable to that of the mature peptide LL-37 (in vitro). Antimicrobial peptide that is an integral component of the innate immune system. Binds to bacterial lipopolysaccharides (LPS). Causes membrane permeabilization by forming transmembrane pores (in vitro). Causes lysis of E.coli. Exhibits antimicrobial activity against Gram-negative bacteria such as P.aeruginosa, S.typhimurium, E.aerogenes, E.coli and P.syringae, Gram-positive bacteria such as L.monocytogenes, S.epidermidis, S.pyogenes and S.aureus, as well as vancomycin-resistant enterococci (in vitro). Exhibits antimicrobial activity against methicillin-resistant S.aureus, P.mirabilis, and C.albicans in low-salt media, but not in media containing 100 mM NaCl (in vitro). Forms chiral supramolecular assemblies with quinolone signal (PQS) molecules of P.aeruginosa, which may lead to interference of bacterial quorum signaling and perturbance of bacterial biofilm formation. May form supramolecular fiber-like assemblies on bacterial membranes. Induces cytokine and chemokine producation as well as TNF/TNFA and CSF2/GMCSF production in normal human keratinocytes. Exhibits hemolytic activity against red blood cells. In terms of biological role, exhibits antimicrobial activity against E.coli and B.megaterium (in vitro). The sequence is that of Cathelicidin antimicrobial peptide from Nomascus concolor (Black crested gibbon).